Reading from the N-terminus, the 545-residue chain is MTNTNRPIRRALVSVFHKEGIEVLAEAFVKAGTEVVSTGSTAKKLAELGVKVTEVSDVTGFPECLDGRVKTLHPYIHAGILADMTNPEHAKQLEEFGIKPFDLVVVNLYPFADTVRSGANEADTIEKIDIGGPSMVRGAAKNHATVAIVTDPADYALVASRVADGTGFSLDERKWLAAKAFAHTAAYDATINEWTAKHWPKPASLDAVEVDKDDQGTEVDPAKFPAQFTRTWDRAHTLRYGENSHQQAALYIDPLNQTGFAHAEQLGGKPMSYNNYVDADAAWRTVWDMAPAIAVAVVKHNNPCGLAIGATAAEAHKKAHACDPMSAYGGVIACNSKVTLEMAESVRPIFTEVIVAPDYEPAALELLQTKKKNLRILEVAEPPKGHEAIRQIDGGLLVQDTDLINAVGDDPDAWKLVAGEAADADTLKDLVFAWRAIRCVKSNAILLAHDQATVGIGMGQVNRVDSCHLAVERANTLADGADRATGAVAASDAFFPFADGAQVLIDAGVKAIVQPGGSIRDEEVIEAAKKAGVTMYLTGTRHFFH.

Residues 1–150 enclose the MGS-like domain; the sequence is MTNTNRPIRR…KNHATVAIVT (150 aa).

Belongs to the PurH family.

It carries out the reaction (6R)-10-formyltetrahydrofolate + 5-amino-1-(5-phospho-beta-D-ribosyl)imidazole-4-carboxamide = 5-formamido-1-(5-phospho-D-ribosyl)imidazole-4-carboxamide + (6S)-5,6,7,8-tetrahydrofolate. The enzyme catalyses IMP + H2O = 5-formamido-1-(5-phospho-D-ribosyl)imidazole-4-carboxamide. It functions in the pathway purine metabolism; IMP biosynthesis via de novo pathway; 5-formamido-1-(5-phospho-D-ribosyl)imidazole-4-carboxamide from 5-amino-1-(5-phospho-D-ribosyl)imidazole-4-carboxamide (10-formyl THF route): step 1/1. The protein operates within purine metabolism; IMP biosynthesis via de novo pathway; IMP from 5-formamido-1-(5-phospho-D-ribosyl)imidazole-4-carboxamide: step 1/1. The sequence is that of Bifunctional purine biosynthesis protein PurH from Bifidobacterium longum (strain NCC 2705).